The chain runs to 215 residues: Ribose-5-phosphate isomerase A (215 aa).

Substrate is bound by residues Thr26 to Thr29, Asp79 to Asp82, and Lys92 to Gly95. Glu101 acts as the Proton acceptor in catalysis. Lys119 contacts substrate.

This sequence belongs to the ribose 5-phosphate isomerase family. In terms of assembly, homodimer.

It carries out the reaction aldehydo-D-ribose 5-phosphate = D-ribulose 5-phosphate. It participates in carbohydrate degradation; pentose phosphate pathway; D-ribose 5-phosphate from D-ribulose 5-phosphate (non-oxidative stage): step 1/1. Its function is as follows. Catalyzes the reversible conversion of ribose-5-phosphate to ribulose 5-phosphate. In Stenotrophomonas maltophilia (strain K279a), this protein is Ribose-5-phosphate isomerase A.